Reading from the N-terminus, the 454-residue chain is tRNA modification GTPase MnmE (454 aa).

The (6S)-5-formyl-5,6,7,8-tetrahydrofolate site is built by arginine 23, glutamate 80, and lysine 120. The TrmE-type G domain occupies 216 to 377 (GMKVVIAGRP…LRNHLKQSMG (162 aa)). Asparagine 226 is a binding site for K(+). GTP contacts are provided by residues 226–231 (NAGKSS), 245–251 (TDIAGTT), 270–273 (DTAG), 335–338 (NKAD), and 358–360 (SAR). Residue serine 230 coordinates Mg(2+). 3 residues coordinate K(+): threonine 245, isoleucine 247, and threonine 250. Threonine 251 contacts Mg(2+). Residue lysine 454 coordinates (6S)-5-formyl-5,6,7,8-tetrahydrofolate.

Belongs to the TRAFAC class TrmE-Era-EngA-EngB-Septin-like GTPase superfamily. TrmE GTPase family. Homodimer. Heterotetramer of two MnmE and two MnmG subunits. The cofactor is K(+).

The protein resides in the cytoplasm. Exhibits a very high intrinsic GTPase hydrolysis rate. Involved in the addition of a carboxymethylaminomethyl (cmnm) group at the wobble position (U34) of certain tRNAs, forming tRNA-cmnm(5)s(2)U34. This is tRNA modification GTPase MnmE from Klebsiella pneumoniae (strain 342).